The following is a 477-amino-acid chain: Glycogen synthase (477 aa).

Lys15 provides a ligand contact to ADP-alpha-D-glucose.

The protein belongs to the glycosyltransferase 1 family. Bacterial/plant glycogen synthase subfamily.

It carries out the reaction [(1-&gt;4)-alpha-D-glucosyl](n) + ADP-alpha-D-glucose = [(1-&gt;4)-alpha-D-glucosyl](n+1) + ADP + H(+). It participates in glycan biosynthesis; glycogen biosynthesis. In terms of biological role, synthesizes alpha-1,4-glucan chains using ADP-glucose. This is Glycogen synthase from Escherichia fergusonii (strain ATCC 35469 / DSM 13698 / CCUG 18766 / IAM 14443 / JCM 21226 / LMG 7866 / NBRC 102419 / NCTC 12128 / CDC 0568-73).